Reading from the N-terminus, the 544-residue chain is Zinc finger and SCAN domain-containing protein 25 (544 aa).

Residues lysine 3 and lysine 22 each participate in a glycyl lysine isopeptide (Lys-Gly) (interchain with G-Cter in SUMO2) cross-link. The SCAN box domain occupies 42-124 (RLRFRQFRYQ…AMVEDLTERA (83 aa)). Residue lysine 128 forms a Glycyl lysine isopeptide (Lys-Gly) (interchain with G-Cter in SUMO2) linkage. Residues 157–189 (VEVKPEWGMPPGEGVQGPDPGTEEQLSQDPGDE) are disordered. Glycyl lysine isopeptide (Lys-Gly) (interchain with G-Cter in SUMO2) cross-links involve residues lysine 278 and lysine 285. 6 C2H2-type zinc fingers span residues 348–370 (FQCP…QRTH), 375–397 (YGCV…QRTH), 403–425 (YVCS…QRSH), 431–453 (YKCG…RRTH), 459–480 (YTCE…RRAH), and 486–508 (YGCQ…QRIH). The C2H2-type 7; degenerate zinc-finger motif lies at 514–536 (YHCPACGRSFNQRSILNRHQKTQ).

This sequence belongs to the krueppel C2H2-type zinc-finger protein family.

The protein resides in the nucleus. In terms of biological role, may be involved in transcriptional regulation. The polypeptide is Zinc finger and SCAN domain-containing protein 25 (ZSCAN25) (Homo sapiens (Human)).